The chain runs to 111 residues: Universal stress protein B (111 aa).

The next 2 membrane-spanning stretches (helical) occupy residues 1 to 21 and 90 to 110; these read MIST…NMAR and FLLT…LMIW.

Belongs to the universal stress protein B family.

The protein localises to the cell inner membrane. The chain is Universal stress protein B from Salmonella arizonae (strain ATCC BAA-731 / CDC346-86 / RSK2980).